We begin with the raw amino-acid sequence, 426 residues long: MSNVVVMGAQWGDEGKGKIVDLLTRESDVIVRFQGGNNAGHTVLVGEKQYILHLIPSGILHEGKKCLIGNGVVLDPEVFCREIDSLRAQGVDMSPARLMISRKTHLIMPYHKVLDQAREAHKCKDAKIGTTGRGIGPCYEDKSARIGVRAADLAMPELLRSKIEAALVEKNALFTGLYGQQPLDADAVFEEVMAHGAKLVPYLADVSSEIHDAWAEGRSVLFEGAQGTHLDIDHGTYPFVTSSNTVSGNAAAGSGVPPTKLDRIIAIVKAYTTRVGAGPFPTELDDATGEYLQQKGHEFGATTGRKRRCGWLDAVVLRESVRLNGPTDIALTKLDVLSGLKEISICTAYTYRGEQVAYPPQEQNGMAHVTPVYETMPGWDDDITGCTTWESLPAPVKAYVLRIEEITGVRISLVSVGPERDQTIRR.

GTP contacts are provided by residues 12–18 and 40–42; these read GDEGKGK and GHT. Catalysis depends on Asp-13, which acts as the Proton acceptor. Mg(2+) contacts are provided by Asp-13 and Gly-40. IMP-binding positions include 13-16, 38-41, Thr-131, Arg-145, Gln-226, Thr-241, and Arg-305; these read DEGK and NAGH. Catalysis depends on His-41, which acts as the Proton donor. 301–307 provides a ligand contact to substrate; that stretch reads ATTGRKR. Residues Arg-307, 333–335, and 415–417 contribute to the GTP site; these read KLD and SVG.

This sequence belongs to the adenylosuccinate synthetase family. As to quaternary structure, homodimer. The cofactor is Mg(2+).

It is found in the cytoplasm. The catalysed reaction is IMP + L-aspartate + GTP = N(6)-(1,2-dicarboxyethyl)-AMP + GDP + phosphate + 2 H(+). Its pathway is purine metabolism; AMP biosynthesis via de novo pathway; AMP from IMP: step 1/2. Plays an important role in the de novo pathway of purine nucleotide biosynthesis. Catalyzes the first committed step in the biosynthesis of AMP from IMP. This chain is Adenylosuccinate synthetase, found in Nitratidesulfovibrio vulgaris (strain DP4) (Desulfovibrio vulgaris).